Consider the following 100-residue polypeptide: Urease subunit gamma (100 aa).

This sequence belongs to the urease gamma subunit family. As to quaternary structure, heterotrimer of UreA (gamma), UreB (beta) and UreC (alpha) subunits. Three heterotrimers associate to form the active enzyme.

Its subcellular location is the cytoplasm. It catalyses the reaction urea + 2 H2O + H(+) = hydrogencarbonate + 2 NH4(+). It functions in the pathway nitrogen metabolism; urea degradation; CO(2) and NH(3) from urea (urease route): step 1/1. This chain is Urease subunit gamma, found in Paracidovorax citrulli (strain AAC00-1) (Acidovorax citrulli).